The sequence spans 106 residues: Pyrimidine/purine nucleoside phosphorylase (106 aa).

It belongs to the nucleoside phosphorylase PpnP family.

The enzyme catalyses a purine D-ribonucleoside + phosphate = a purine nucleobase + alpha-D-ribose 1-phosphate. It carries out the reaction adenosine + phosphate = alpha-D-ribose 1-phosphate + adenine. It catalyses the reaction cytidine + phosphate = cytosine + alpha-D-ribose 1-phosphate. The catalysed reaction is guanosine + phosphate = alpha-D-ribose 1-phosphate + guanine. The enzyme catalyses inosine + phosphate = alpha-D-ribose 1-phosphate + hypoxanthine. It carries out the reaction thymidine + phosphate = 2-deoxy-alpha-D-ribose 1-phosphate + thymine. It catalyses the reaction uridine + phosphate = alpha-D-ribose 1-phosphate + uracil. The catalysed reaction is xanthosine + phosphate = alpha-D-ribose 1-phosphate + xanthine. In terms of biological role, catalyzes the phosphorolysis of diverse nucleosides, yielding D-ribose 1-phosphate and the respective free bases. Can use uridine, adenosine, guanosine, cytidine, thymidine, inosine and xanthosine as substrates. Also catalyzes the reverse reactions. This chain is Pyrimidine/purine nucleoside phosphorylase, found in Leptospira interrogans serogroup Icterohaemorrhagiae serovar copenhageni (strain Fiocruz L1-130).